We begin with the raw amino-acid sequence, 125 residues long: Holo-[acyl-carrier-protein] synthase (125 aa).

Residues Asp-8 and Glu-57 each coordinate Mg(2+).

This sequence belongs to the P-Pant transferase superfamily. AcpS family. Mg(2+) is required as a cofactor.

It localises to the cytoplasm. It carries out the reaction apo-[ACP] + CoA = holo-[ACP] + adenosine 3',5'-bisphosphate + H(+). Functionally, transfers the 4'-phosphopantetheine moiety from coenzyme A to a Ser of acyl-carrier-protein. The chain is Holo-[acyl-carrier-protein] synthase from Blochmanniella pennsylvanica (strain BPEN).